A 171-amino-acid chain; its full sequence is Disulfide bond formation protein B (171 aa).

Topologically, residues 1–10 (MQRLLTYRAL) are cytoplasmic. The chain crosses the membrane as a helical span at residues 11–27 (NFILFIASVVAMLFAII). Residues 28–46 (FLQNYKGLEPCPLCIFQRI) lie on the Periplasmic side of the membrane. An intrachain disulfide couples cysteine 38 to cysteine 41. The chain crosses the membrane as a helical span at residues 47–63 (GLMVMGGFSLIAAVGHP). Topologically, residues 64 to 70 (KKMGMQL) are cytoplasmic. A helical transmembrane segment spans residues 71–88 (LLWIGSMAGILWSAGVAA). The Periplasmic segment spans residues 89-145 (RHVWIQHLPADQVPACGPGLDYFLEALPMKQVINQVLSGSGECAEISWRFLGLSIPE). Cysteine 104 and cysteine 131 form a disulfide bridge. Residues 146-164 (QALILFTALILVNLLVLWR) form a helical membrane-spanning segment. Residues 165 to 171 (IISKRTA) are Cytoplasmic-facing.

Belongs to the DsbB family.

The protein resides in the cell inner membrane. In terms of biological role, required for disulfide bond formation in some periplasmic proteins. Acts by oxidizing the DsbA protein. The polypeptide is Disulfide bond formation protein B (Psychrobacter sp. (strain PRwf-1)).